The following is a 122-amino-acid chain: Large ribosomal subunit protein uL18 (122 aa).

The interval 1–26 is disordered; the sequence is MSNLSRKQQTQKRHRRLRRHLKGTAQ. Residues 9-22 show a composition bias toward basic residues; that stretch reads QTQKRHRRLRRHLK.

It belongs to the universal ribosomal protein uL18 family. As to quaternary structure, part of the 50S ribosomal subunit; part of the 5S rRNA/L5/L18/L25 subcomplex. Contacts the 5S and 23S rRNAs.

In terms of biological role, this is one of the proteins that bind and probably mediate the attachment of the 5S RNA into the large ribosomal subunit, where it forms part of the central protuberance. This chain is Large ribosomal subunit protein uL18, found in Prochlorococcus marinus (strain MIT 9313).